The following is a 476-amino-acid chain: Transmembrane transporter FPSE_08127 (476 aa).

The chain crosses the membrane as a helical span at residues 72-92; it reads ILAIPAALGALGSIGGSLCII. N-linked (GlcNAc...) asparagine glycosylation occurs at asparagine 111. The next 9 membrane-spanning stretches (helical) occupy residues 133-153, 164-184, 192-212, 231-251, 275-295, 317-337, 364-384, 387-407, and 431-451; these read LVGVQIIIAQTLVTAGGVVAI, GTCTVAFGLISAIAVTAFSAI, WLTWIGFITFVIGVFIFVVAV, WAPIAYPSFVVGMVSVTNIFI, ACLVAGFIVGAMYLSFSLVIY, VAYGVSLPGLILGVGIYQHVA, LGINIALGTAAFIVAEAVPIL, LLGLAGAICLAPFSLIFPALL, and LIMMFGFFMMIAGFYSVVVLI.

Belongs to the amino acid/polyamine transporter 2 family.

The protein resides in the membrane. Its function is as follows. Transmembrane transporter; part of the Fusarium detoxification of benzoxazolinone cluster involved in the degradation of benzoxazolinones produced by the host plant. Maize, wheat, and rye produce the 2 benzoxazinone phytoanticipins 2,4-dihy-droxy-7-methoxy-1,4-benzoxazin-3-one (DIMBOA) and 2,4-dihydroxy-1,4-benzoxazin-3-one (DIBOA) that, due to their inherent instability once released, spontaneously degrade to the more stable corresponding benzoxazolinones, 6-methoxy-2-benzoxazolinone (MBOA) and 2-benzoxazolinone (BOA), respectively. FPSE_08127 is proposed to shuttle metabolites of benzoxazolinone degradation. The chain is Transmembrane transporter FPSE_08127 from Fusarium pseudograminearum (strain CS3096) (Wheat and barley crown-rot fungus).